A 305-amino-acid polypeptide reads, in one-letter code: GTPase Era (305 aa).

Residues 9–176 (KSGFISIIGR…LDTLPKYLPE (168 aa)) form the Era-type G domain. The tract at residues 17-24 (GRPNVGKS) is G1. A GTP-binding site is contributed by 17–24 (GRPNVGKS). The tract at residues 43–47 (QTTRN) is G2. The tract at residues 64 to 67 (DTPG) is G3. GTP-binding positions include 64-68 (DTPGI) and 126-129 (NKID). Residues 126–129 (NKID) are G4. Residues 155 to 157 (ISA) are G5. A KH type-2 domain is found at 207 to 286 (TREEIPHSIA…YLELWVKVQK (80 aa)).

The protein belongs to the TRAFAC class TrmE-Era-EngA-EngB-Septin-like GTPase superfamily. Era GTPase family. Monomer.

Its subcellular location is the cytoplasm. The protein resides in the cell membrane. Its function is as follows. An essential GTPase that binds both GDP and GTP, with rapid nucleotide exchange. Plays a role in 16S rRNA processing and 30S ribosomal subunit biogenesis and possibly also in cell cycle regulation and energy metabolism. The chain is GTPase Era from Lysinibacillus sphaericus (strain C3-41).